A 408-amino-acid polypeptide reads, in one-letter code: tRNA-specific 2-thiouridylase MnmA (408 aa).

Residues 38 to 45 (GMSGGVDS) and M64 contribute to the ATP site. An interaction with target base in tRNA region spans residues 124 to 126 (NPD). The active-site Nucleophile is C129. Cysteines 129 and 231 form a disulfide. G153 lines the ATP pocket. An interaction with tRNA region spans residues 181-183 (KDQ). C231 (cysteine persulfide intermediate) is an active-site residue. Positions 348-349 (RY) are interaction with tRNA.

It belongs to the MnmA/TRMU family.

The protein localises to the cytoplasm. It catalyses the reaction S-sulfanyl-L-cysteinyl-[protein] + uridine(34) in tRNA + AH2 + ATP = 2-thiouridine(34) in tRNA + L-cysteinyl-[protein] + A + AMP + diphosphate + H(+). Catalyzes the 2-thiolation of uridine at the wobble position (U34) of tRNA, leading to the formation of s(2)U34. In Psychrobacter arcticus (strain DSM 17307 / VKM B-2377 / 273-4), this protein is tRNA-specific 2-thiouridylase MnmA.